The chain runs to 425 residues: MNLLIKGGRVIDPSQGIDANLDVLIADGVVLELGQGLAAPEGTPAIDAGGLIVTPGLIDMHVHLRDPGLEYKEDIATGSRSAAAGGFTSVACMPNTSPVIDSKAIASYIINKAKSEALVNVFPIGCITKGGKGESLAEMGELKEAGCVGVSDDGKPVCNSELMRRALEYAKGIGITVISHSEDLALVGEGVMNEGFVSTELGLKGIPWAAEDIAVAREVYLAEFAGAPVHIAHISTVGSARIVRNAKARGVKVTCETAPHYFTLTDEAVRGYDTNAKMNPPLRSAADIEAMKAGLADGTIDAIATDHAPHHPDEKDVEFNVALNGIVGLETSLPLSLKLVEEGRLDLNQLVSLMSCNPAKILGLDRGTLKVGAVGDVTVIDPAKEWQVEAAKLESKSKNSPFLGWKMKGRAVYTVVKGQVVYQAG.

Residues H61 and H63 each contribute to the Zn(2+) site. Substrate is bound by residues 63-65 (HLR) and N95. Zn(2+) is bound by residues D153, H180, and H233. A substrate-binding site is contributed by N279. Zn(2+) is bound at residue D306. The active site involves D306. H310 is a binding site for substrate.

This sequence belongs to the metallo-dependent hydrolases superfamily. DHOase family. Class I DHOase subfamily. Requires Zn(2+) as cofactor.

The catalysed reaction is (S)-dihydroorotate + H2O = N-carbamoyl-L-aspartate + H(+). Its pathway is pyrimidine metabolism; UMP biosynthesis via de novo pathway; (S)-dihydroorotate from bicarbonate: step 3/3. Catalyzes the reversible cyclization of carbamoyl aspartate to dihydroorotate. The sequence is that of Dihydroorotase from Geobacter sp. (strain M21).